The chain runs to 167 residues: Signal peptidase complex catalytic subunit SEC11 (167 aa).

The Cytoplasmic segment spans residues 1-6 (MNIRQQ). A helical; Signal-anchor for type II membrane protein membrane pass occupies residues 7–24 (LTKFLGLFLTLASAFMFW). Topologically, residues 25-167 (KGLSVVTNSH…LALSSLLGSE (143 aa)) are lumenal. Active-site charge relay system residues include serine 44, histidine 83, and aspartate 109. The tract at residues 153-164 (ALMGMLALSSLL) is C-terminal short (CTS) helix.

This sequence belongs to the peptidase S26B family. As to quaternary structure, component of the signal peptidase complex (SPC) composed of a catalytic subunit SEC11 and three accessory subunits SPC1, SPC2 and SPC3. The complex induces a local thinning of the ER membrane which is used to measure the length of the signal peptide (SP) h-region of protein substrates. This ensures the selectivity of the complex towards h-regions shorter than 18-20 amino acids. SPC associates with the translocon complex.

The protein localises to the endoplasmic reticulum membrane. It carries out the reaction Cleavage of hydrophobic, N-terminal signal or leader sequences from secreted and periplasmic proteins.. Its function is as follows. Catalytic component of the signal peptidase complex (SPC) which catalyzes the cleavage of N-terminal signal sequences from nascent proteins as they are translocated into the lumen of the endoplasmic reticulum. Specifically cleaves N-terminal signal peptides that contain a hydrophobic alpha-helix (h-region) shorter than 18-20 amino acids. The chain is Signal peptidase complex catalytic subunit SEC11 (SEC11) from Eremothecium gossypii (strain ATCC 10895 / CBS 109.51 / FGSC 9923 / NRRL Y-1056) (Yeast).